The chain runs to 118 residues: Fluoride-specific ion channel FluC 1 (118 aa).

2 helical membrane passes run 1 to 21 (MIQC…RGFV) and 29 to 49 (FNTS…FCIG). Na(+)-binding residues include G71 and T74. Residues 95–115 (LFILYSILQYGVSFVACLLGY) traverse the membrane as a helical segment.

This sequence belongs to the fluoride channel Fluc/FEX (TC 1.A.43) family.

Its subcellular location is the cell membrane. It carries out the reaction fluoride(in) = fluoride(out). With respect to regulation, na(+) is not transported, but it plays an essential structural role and its presence is essential for fluoride channel function. Functionally, fluoride-specific ion channel. Important for reducing fluoride concentration in the cell, thus reducing its toxicity. This Staphylococcus saprophyticus subsp. saprophyticus (strain ATCC 15305 / DSM 20229 / NCIMB 8711 / NCTC 7292 / S-41) protein is Fluoride-specific ion channel FluC 1.